Here is a 202-residue protein sequence, read N- to C-terminus: ATP-dependent Clp protease proteolytic subunit (202 aa).

Serine 106 (nucleophile) is an active-site residue. The active site involves histidine 131.

Belongs to the peptidase S14 family. In terms of assembly, fourteen ClpP subunits assemble into 2 heptameric rings which stack back to back to give a disk-like structure with a central cavity, resembling the structure of eukaryotic proteasomes.

It localises to the cytoplasm. The catalysed reaction is Hydrolysis of proteins to small peptides in the presence of ATP and magnesium. alpha-casein is the usual test substrate. In the absence of ATP, only oligopeptides shorter than five residues are hydrolyzed (such as succinyl-Leu-Tyr-|-NHMec, and Leu-Tyr-Leu-|-Tyr-Trp, in which cleavage of the -Tyr-|-Leu- and -Tyr-|-Trp bonds also occurs).. In terms of biological role, cleaves peptides in various proteins in a process that requires ATP hydrolysis. Has a chymotrypsin-like activity. Plays a major role in the degradation of misfolded proteins. The sequence is that of ATP-dependent Clp protease proteolytic subunit from Verminephrobacter eiseniae (strain EF01-2).